A 446-amino-acid chain; its full sequence is Methanogenesis regulatory protein FilR1 (446 aa).

Residues 297 to 416 (DVMIVEDDLG…QRLPEIAEEA (120 aa)) form the Response regulatory domain. The residue at position 350 (D350) is a 4-aspartylphosphate.

In terms of processing, phosphorylated by FilI.

Functionally, member of the two-component regulatory system FilI/FilRs, which is involved in the regulation of methanogenesis. Regulates its own expression, expression of the filI-filR2 operon, and of genes involved in methanogenesis such as acs1, acs4 and mtrABC. Acts by binding to the promoters. The polypeptide is Methanogenesis regulatory protein FilR1 (Methanothrix harundinacea (strain 6Ac) (Methanosaeta harundinacea)).